A 121-amino-acid polypeptide reads, in one-letter code: Phosphoribosyl-ATP pyrophosphatase (121 aa).

It belongs to the PRA-PH family.

It is found in the cytoplasm. The enzyme catalyses 1-(5-phospho-beta-D-ribosyl)-ATP + H2O = 1-(5-phospho-beta-D-ribosyl)-5'-AMP + diphosphate + H(+). It participates in amino-acid biosynthesis; L-histidine biosynthesis; L-histidine from 5-phospho-alpha-D-ribose 1-diphosphate: step 2/9. The chain is Phosphoribosyl-ATP pyrophosphatase from Burkholderia cenocepacia (strain ATCC BAA-245 / DSM 16553 / LMG 16656 / NCTC 13227 / J2315 / CF5610) (Burkholderia cepacia (strain J2315)).